A 139-amino-acid polypeptide reads, in one-letter code: Large ribosomal subunit protein bL17 (139 aa).

Belongs to the bacterial ribosomal protein bL17 family. Part of the 50S ribosomal subunit. Contacts protein L32.

The sequence is that of Large ribosomal subunit protein bL17 from Cereibacter sphaeroides (strain ATCC 17025 / ATH 2.4.3) (Rhodobacter sphaeroides).